We begin with the raw amino-acid sequence, 465 residues long: ATP synthase subunit beta (465 aa).

Residue 152–159 (GGAGVGKT) participates in ATP binding.

Belongs to the ATPase alpha/beta chains family. In terms of assembly, F-type ATPases have 2 components, CF(1) - the catalytic core - and CF(0) - the membrane proton channel. CF(1) has five subunits: alpha(3), beta(3), gamma(1), delta(1), epsilon(1). CF(0) has three main subunits: a(1), b(2) and c(9-12). The alpha and beta chains form an alternating ring which encloses part of the gamma chain. CF(1) is attached to CF(0) by a central stalk formed by the gamma and epsilon chains, while a peripheral stalk is formed by the delta and b chains.

The protein resides in the cell inner membrane. The catalysed reaction is ATP + H2O + 4 H(+)(in) = ADP + phosphate + 5 H(+)(out). Its function is as follows. Produces ATP from ADP in the presence of a proton gradient across the membrane. The catalytic sites are hosted primarily by the beta subunits. This is ATP synthase subunit beta from Campylobacter jejuni subsp. jejuni serotype O:6 (strain 81116 / NCTC 11828).